The sequence spans 247 residues: Segregation and condensation protein A (247 aa).

Belongs to the ScpA family. Component of a cohesin-like complex composed of ScpA, ScpB and the Smc homodimer, in which ScpA and ScpB bind to the head domain of Smc. The presence of the three proteins is required for the association of the complex with DNA.

Its subcellular location is the cytoplasm. Functionally, participates in chromosomal partition during cell division. May act via the formation of a condensin-like complex containing Smc and ScpB that pull DNA away from mid-cell into both cell halves. The polypeptide is Segregation and condensation protein A (Mycoplasma mobile (strain ATCC 43663 / 163K / NCTC 11711) (Mesomycoplasma mobile)).